Here is a 95-residue protein sequence, read N- to C-terminus: UPF0235 protein PTH_1821 (95 aa).

The protein belongs to the UPF0235 family.

The polypeptide is UPF0235 protein PTH_1821 (Pelotomaculum thermopropionicum (strain DSM 13744 / JCM 10971 / SI)).